The following is a 473-amino-acid chain: O-methyltransferase ARMGADRAFT_1088206 (473 aa).

S-adenosyl-L-methionine contacts are provided by residues 276-277 (AG), Asp299, 330-331 (DM), and Arg348. Catalysis depends on His352, which acts as the Proton acceptor.

The protein belongs to the class I-like SAM-binding methyltransferase superfamily. Cation-independent O-methyltransferase family.

It functions in the pathway secondary metabolite biosynthesis. In terms of biological role, O-methyltransferase, part of the gene cluster that mediates the biosynthesis of melleolides, a range of antifungal and phytotoxic polyketide derivatives composed of an orsellinic acid (OA) moiety esterified to various sesquiterpene alcohols. The first step in melleolides biosynthesis is performed by the delta(6)-protoilludene synthase PRO1 which catalyzes the cyclization of farnesyl diphosphate to protoilludene. The orsellinic acid synthase armB produces OA by condensing acetyl-CoA with 3 malonyl-CoA units in a three-round chain elongation reaction folowed by a C2-C7 ring closure. ArmB further catalyzes the trans-esterification of OA to the various sesquiterpene alcohols resulting from the hydroxylation of protoilludene. The melleolides cluster also includes 5 cytochrome P450 monooxygenases, 4 NAD(+)-dependent oxidoreductases, one flavin-dependent oxidoreductase, and one O-methyltransferase. The cytochrome P450 monooxygenases may be involved in protoilludene hydroxylation to elaborate melleolides with multiple alcohol groups, such as melleolide D, which carries alcohol functionalities at C-4, C-5, C-10, and C-13. The role of the NAD(+)-dependent enzymes remains unknown. Numerous melleolides, including arnamial, show 5'-O-methylation of the aromatic moiety which may be catalyzed by the methyltransferase encoded in the cluster. The flavin-dependent oxidoreductase might represent the dehydrogenase yielding the aldehyde in position 1 of arnamial and other melleolides. Finally, several halogenase localized outside of the cluster, are able to catalyze the transfer of a single chlorine atom to the melleolide backbone, resulting in a 6'-chloromelleolide product. The protein is O-methyltransferase ARMGADRAFT_1088206 of Armillaria gallica (Bulbous honey fungus).